The primary structure comprises 737 residues: DNA polymerase iota (737 aa).

Residues I17 to G231 enclose the UmuC domain. D21 is a binding site for Mg(2+). Residues Y26 and R58 each coordinate a 2'-deoxyribonucleoside 5'-triphosphate. A Mg(2+)-binding site is contributed by D113. E114 is an active-site residue. DNA-binding stretches follow at residues T212–D277 and K288–Q413. 4 disordered regions span residues T443–P464, S482–K515, D557–T581, and L607–T643. A compositionally biased stretch (polar residues) spans G491–S502. Composition is skewed to low complexity over residues P563–P577, L607–P618, and P632–T643. Residues V669–I686 carry the Ubiquitin-binding (UBM) motif.

This sequence belongs to the DNA polymerase type-Y family. The cofactor is Mg(2+). Mn(2+) is required as a cofactor.

The protein resides in the nucleus. The catalysed reaction is DNA(n) + a 2'-deoxyribonucleoside 5'-triphosphate = DNA(n+1) + diphosphate. In terms of biological role, error-prone DNA polymerase specifically involved in DNA repair. Plays an important role in translesion synthesis, where the normal high-fidelity DNA polymerases cannot proceed and DNA synthesis stalls. Favors Hoogsteen base-pairing in the active site. Inserts the correct base with higher fidelity opposite an adenosine template. Exhibits low fidelity and efficiency opposite a thymidine template, where it will preferentially insert guanosine. Forms a Schiff base with 5'-deoxyribose phosphate at abasic sites, but may not have lyase activity. This is DNA polymerase iota from Drosophila melanogaster (Fruit fly).